A 361-amino-acid polypeptide reads, in one-letter code: Phosphoserine aminotransferase (361 aa).

Residue Arg-43 coordinates L-glutamate. Residues 77 to 78, Trp-103, Thr-153, Asp-173, and Gln-196 contribute to the pyridoxal 5'-phosphate site; that span reads AS. Lys-197 bears the N6-(pyridoxal phosphate)lysine mark. 238–239 is a pyridoxal 5'-phosphate binding site; it reads NT.

It belongs to the class-V pyridoxal-phosphate-dependent aminotransferase family. SerC subfamily. In terms of assembly, homodimer. It depends on pyridoxal 5'-phosphate as a cofactor.

The protein resides in the cytoplasm. The enzyme catalyses O-phospho-L-serine + 2-oxoglutarate = 3-phosphooxypyruvate + L-glutamate. The catalysed reaction is 4-(phosphooxy)-L-threonine + 2-oxoglutarate = (R)-3-hydroxy-2-oxo-4-phosphooxybutanoate + L-glutamate. Its pathway is amino-acid biosynthesis; L-serine biosynthesis; L-serine from 3-phospho-D-glycerate: step 2/3. It functions in the pathway cofactor biosynthesis; pyridoxine 5'-phosphate biosynthesis; pyridoxine 5'-phosphate from D-erythrose 4-phosphate: step 3/5. Its function is as follows. Catalyzes the reversible conversion of 3-phosphohydroxypyruvate to phosphoserine and of 3-hydroxy-2-oxo-4-phosphonooxybutanoate to phosphohydroxythreonine. In Pseudomonas paraeruginosa (strain DSM 24068 / PA7) (Pseudomonas aeruginosa (strain PA7)), this protein is Phosphoserine aminotransferase.